Reading from the N-terminus, the 483-residue chain is Cobyric acid synthase (483 aa).

The GATase cobBQ-type domain occupies 248–435 (VLKVVVPVLP…LHGLFETAAA (188 aa)). The active-site Nucleophile is Cys-329. Residue His-427 is part of the active site.

Belongs to the CobB/CobQ family. CobQ subfamily.

Its pathway is cofactor biosynthesis; adenosylcobalamin biosynthesis. Catalyzes amidations at positions B, D, E, and G on adenosylcobyrinic A,C-diamide. NH(2) groups are provided by glutamine, and one molecule of ATP is hydrogenolyzed for each amidation. This Pseudomonas fluorescens (strain SBW25) protein is Cobyric acid synthase.